Consider the following 426-residue polypeptide: 4-hydroxy-3-methylbut-2-en-1-yl diphosphate synthase (flavodoxin) (426 aa).

Residues 1–20 (MLDRDLTLSDDAYESSPVSR) form a disordered region. Residues Cys-320, Cys-323, Cys-366, and Glu-373 each contribute to the [4Fe-4S] cluster site.

The protein belongs to the IspG family. [4Fe-4S] cluster serves as cofactor.

It catalyses the reaction (2E)-4-hydroxy-3-methylbut-2-enyl diphosphate + oxidized [flavodoxin] + H2O + 2 H(+) = 2-C-methyl-D-erythritol 2,4-cyclic diphosphate + reduced [flavodoxin]. It functions in the pathway isoprenoid biosynthesis; isopentenyl diphosphate biosynthesis via DXP pathway; isopentenyl diphosphate from 1-deoxy-D-xylulose 5-phosphate: step 5/6. Its function is as follows. Converts 2C-methyl-D-erythritol 2,4-cyclodiphosphate (ME-2,4cPP) into 1-hydroxy-2-methyl-2-(E)-butenyl 4-diphosphate. The polypeptide is 4-hydroxy-3-methylbut-2-en-1-yl diphosphate synthase (flavodoxin) (Wolbachia pipientis subsp. Culex pipiens (strain wPip)).